A 291-amino-acid polypeptide reads, in one-letter code: D-alanine--D-alanine ligase (291 aa).

Residues 99–291 (KRIVKSLGIN…FKKLISIIIT (193 aa)) enclose the ATP-grasp domain. 125 to 179 (EWNKFPAVVKPVREGSSVGLKIVESLEELKEYALDLLKKTERVMVEEFVEGRDMT) contacts ATP. 3 residues coordinate Mg(2+): D245, E258, and N260.

This sequence belongs to the D-alanine--D-alanine ligase family. Mg(2+) is required as a cofactor. It depends on Mn(2+) as a cofactor.

The protein localises to the cytoplasm. It catalyses the reaction 2 D-alanine + ATP = D-alanyl-D-alanine + ADP + phosphate + H(+). The protein operates within cell wall biogenesis; peptidoglycan biosynthesis. Cell wall formation. This is D-alanine--D-alanine ligase from Aquifex aeolicus (strain VF5).